The chain runs to 211 residues: Dof zinc finger protein 5 (211 aa).

The segment at Phe-37 to Ala-101 is disordered. The span at Ile-68–Arg-80 shows a compositional bias: basic and acidic residues. A Dof-type zinc finger spans residues Leu-109–Pro-163. Residues Cys-111, Cys-114, Cys-136, and Cys-139 each contribute to the Zn(2+) site. Residues Ser-191 to Phe-211 form a disordered region.

Its subcellular location is the nucleus. Its function is as follows. Transcription factor that may transactivate seed storage protein genes in developing seeds. In Oryza sativa subsp. japonica (Rice), this protein is Dof zinc finger protein 5.